The chain runs to 341 residues: Tetraacyldisaccharide 4'-kinase (341 aa).

54–61 (TVGGAGKT) lines the ATP pocket.

This sequence belongs to the LpxK family.

It carries out the reaction a lipid A disaccharide + ATP = a lipid IVA + ADP + H(+). The protein operates within glycolipid biosynthesis; lipid IV(A) biosynthesis; lipid IV(A) from (3R)-3-hydroxytetradecanoyl-[acyl-carrier-protein] and UDP-N-acetyl-alpha-D-glucosamine: step 6/6. Its function is as follows. Transfers the gamma-phosphate of ATP to the 4'-position of a tetraacyldisaccharide 1-phosphate intermediate (termed DS-1-P) to form tetraacyldisaccharide 1,4'-bis-phosphate (lipid IVA). This is Tetraacyldisaccharide 4'-kinase from Brucella melitensis biotype 1 (strain ATCC 23456 / CCUG 17765 / NCTC 10094 / 16M).